The following is a 404-amino-acid chain: MENKIFSVAEISQIFKEAIEGSNYFKNIYVRGEVGNLTFNKSGHVYFSLKDNQSTIAAMIWKSNAHKLTNLNVKEGMEITCYGRLTYYVPSGRVSFEAVDVSVEGKGDLQEIFEERLKEITALGWTDESRKKPINRFAKNIGLITTDSGAAIKDLITTLKRRMPSVNIYLFPTMVQGETAKFDIANKIQQANLFEPKLDILIVGRGGGSYEDLWTFNEMKVLKAIVDSSIPVISAVGHEPDITLSDYVADLRAATPTAAAELASISTEELLKELAYNYENQIRLFKNVYNNQQLKIEEFKKQNILKINNKYDLQSLDLNYIEKSFINNINNIISRNEMFIENIESKTALLDPKKPLDKGFGLIMSKDKQIINSVDKVDINQEIKLVLKDGEIETIIKGVKKHGK.

It belongs to the XseA family. In terms of assembly, heterooligomer composed of large and small subunits.

It localises to the cytoplasm. The enzyme catalyses Exonucleolytic cleavage in either 5'- to 3'- or 3'- to 5'-direction to yield nucleoside 5'-phosphates.. Its function is as follows. Bidirectionally degrades single-stranded DNA into large acid-insoluble oligonucleotides, which are then degraded further into small acid-soluble oligonucleotides. This Mesoplasma florum (strain ATCC 33453 / NBRC 100688 / NCTC 11704 / L1) (Acholeplasma florum) protein is Exodeoxyribonuclease 7 large subunit.